We begin with the raw amino-acid sequence, 491 residues long: Glycogen synthase 1 (491 aa).

An ADP-alpha-D-glucose-binding site is contributed by lysine 15.

The protein belongs to the glycosyltransferase 1 family. Bacterial/plant glycogen synthase subfamily.

The enzyme catalyses [(1-&gt;4)-alpha-D-glucosyl](n) + ADP-alpha-D-glucose = [(1-&gt;4)-alpha-D-glucosyl](n+1) + ADP + H(+). It participates in glycan biosynthesis; glycogen biosynthesis. Functionally, synthesizes alpha-1,4-glucan chains using ADP-glucose. The polypeptide is Glycogen synthase 1 (Synechococcus sp. (strain JA-3-3Ab) (Cyanobacteria bacterium Yellowstone A-Prime)).